The following is a 34-amino-acid chain: Antimicrobial peptide Alo-2 (34 aa).

Disulfide bonds link cysteine 1–cysteine 18, cysteine 8–cysteine 22, and cysteine 17–cysteine 33.

The protein localises to the secreted. Functionally, has antifungal activity against C.glabrata. The chain is Antimicrobial peptide Alo-2 from Acrocinus longimanus (Giant harlequin beetle).